A 236-amino-acid chain; its full sequence is Peptidyl-prolyl cis-trans isomerase CYP21-4 (236 aa).

A helical; Signal-anchor for type II membrane protein transmembrane segment spans residues Ile22 to Val42. The segment at Ser52–Ala71 is disordered. Residues Asn54–Asp67 show a composition bias toward basic and acidic residues. The 151-residue stretch at Phe82–Leu232 folds into the PPIase cyclophilin-type domain. N-linked (GlcNAc...) asparagine glycosylation occurs at Asn86.

The protein belongs to the cyclophilin-type PPIase family. As to expression, ubiquitous.

It is found in the membrane. It carries out the reaction [protein]-peptidylproline (omega=180) = [protein]-peptidylproline (omega=0). Functionally, PPIases accelerate the folding of proteins. It catalyzes the cis-trans isomerization of proline imidic peptide bonds in oligopeptides. In Arabidopsis thaliana (Mouse-ear cress), this protein is Peptidyl-prolyl cis-trans isomerase CYP21-4 (CYP21-4).